The following is a 62-amino-acid chain: Photosystem II reaction center protein Z (62 aa).

A run of 2 helical transmembrane segments spans residues 8–28 and 41–61; these read SVFA…VVLA and FSGA…NSFI.

The protein belongs to the PsbZ family. PSII is composed of 1 copy each of membrane proteins PsbA, PsbB, PsbC, PsbD, PsbE, PsbF, PsbH, PsbI, PsbJ, PsbK, PsbL, PsbM, PsbT, PsbY, PsbZ, Psb30/Ycf12, at least 3 peripheral proteins of the oxygen-evolving complex and a large number of cofactors. It forms dimeric complexes.

It is found in the plastid. Its subcellular location is the chloroplast thylakoid membrane. Functionally, may control the interaction of photosystem II (PSII) cores with the light-harvesting antenna, regulates electron flow through the 2 photosystem reaction centers. PSII is a light-driven water plastoquinone oxidoreductase, using light energy to abstract electrons from H(2)O, generating a proton gradient subsequently used for ATP formation. The sequence is that of Photosystem II reaction center protein Z from Chaetosphaeridium globosum (Charophycean green alga).